We begin with the raw amino-acid sequence, 311 residues long: Meiotically up-regulated gene 146 protein (311 aa).

The protein localises to the cytoplasm. The protein resides in the nucleus. Has a role in sporulation. This chain is Meiotically up-regulated gene 146 protein (mug146), found in Schizosaccharomyces pombe (strain 972 / ATCC 24843) (Fission yeast).